Consider the following 436-residue polypeptide: KICSTOR complex protein kaptin (436 aa).

M1 carries the N-acetylmethionine modification.

Part of the KICSTOR complex composed of KPTN, ITFG2, KICS2 and SZT2. SZT2 probably serves as a link between the other three proteins in the KICSTOR complex and mediates the direct interaction with the GATOR1 complex. May associate with F-actin filaments.

It is found in the lysosome membrane. The protein localises to the cell projection. The protein resides in the lamellipodium. It localises to the stereocilium. Functionally, as part of the KICSTOR complex functions in the amino acid-sensing branch of the TORC1 signaling pathway. Recruits, in an amino acid-independent manner, the GATOR1 complex to the lysosomal membranes and allows its interaction with GATOR2 and the RAG GTPases. Functions upstream of the RAG GTPases and is required to negatively regulate mTORC1 signaling in absence of amino acids. In absence of the KICSTOR complex mTORC1 is constitutively localized to the lysosome and activated. The KICSTOR complex is also probably involved in the regulation of mTORC1 by glucose. The polypeptide is KICSTOR complex protein kaptin (Homo sapiens (Human)).